The chain runs to 365 residues: Histidinol-phosphate aminotransferase 2 (365 aa).

Position 221 is an N6-(pyridoxal phosphate)lysine (Lys-221).

Belongs to the class-II pyridoxal-phosphate-dependent aminotransferase family. Histidinol-phosphate aminotransferase subfamily. As to quaternary structure, homodimer. Pyridoxal 5'-phosphate serves as cofactor.

It catalyses the reaction L-histidinol phosphate + 2-oxoglutarate = 3-(imidazol-4-yl)-2-oxopropyl phosphate + L-glutamate. Its pathway is amino-acid biosynthesis; L-histidine biosynthesis; L-histidine from 5-phospho-alpha-D-ribose 1-diphosphate: step 7/9. The protein is Histidinol-phosphate aminotransferase 2 (hisC2) of Bradyrhizobium diazoefficiens (strain JCM 10833 / BCRC 13528 / IAM 13628 / NBRC 14792 / USDA 110).